A 232-amino-acid polypeptide reads, in one-letter code: Protein DOG1-like 4 (232 aa).

The region spanning 9-229 is the DOG1 domain; that stretch reads EEKFLEFYES…RRWGNRRHYV (221 aa).

The polypeptide is Protein DOG1-like 4 (Arabidopsis thaliana (Mouse-ear cress)).